A 373-amino-acid polypeptide reads, in one-letter code: Probable pectin lyase C (373 aa).

Residues 1-17 form the signal peptide; that stretch reads MKKYLLSLLAAVTYTTA. 2 disulfides stabilise this stretch: Cys-78–Cys-95 and Cys-87–Cys-215. N-linked (GlcNAc...) asparagine glycans are attached at residues Asn-140 and Asn-229. Residue Arg-245 is part of the active site. Cys-315 and Cys-323 are oxidised to a cystine.

This sequence belongs to the polysaccharide lyase 1 family.

It is found in the secreted. The enzyme catalyses Eliminative cleavage of (1-&gt;4)-alpha-D-galacturonan methyl ester to give oligosaccharides with 4-deoxy-6-O-methyl-alpha-D-galact-4-enuronosyl groups at their non-reducing ends.. In terms of biological role, pectinolytic enzymes consist of four classes of enzymes: pectin lyase, polygalacturonase, pectin methylesterase and rhamnogalacturonase. Among pectinolytic enzymes, pectin lyase is the most important in depolymerization of pectin, since it cleaves internal glycosidic bonds of highly methylated pectins. This is Probable pectin lyase C (pelC) from Emericella nidulans (strain FGSC A4 / ATCC 38163 / CBS 112.46 / NRRL 194 / M139) (Aspergillus nidulans).